Here is an 83-residue protein sequence, read N- to C-terminus: FMRFamide-like neuropeptide 23 (83 aa).

Residues methionine 1–glycine 24 form the signal peptide. Positions alanine 25 to glutamate 36 are excised as a propeptide. Phenylalanine 47 is subject to Phenylalanine amide. Positions alanine 50–glutamine 83 are excised as a propeptide.

The protein belongs to the FARP (FMRFamide related peptide) family. Each flp gene is expressed in a distinct set of neurons.

The protein localises to the secreted. FMRFamides and FMRFamide-like peptides are neuropeptides. This chain is FMRFamide-like neuropeptide 23 (flp-23), found in Caenorhabditis elegans.